Consider the following 160-residue polypeptide: Globin-like protein (160 aa).

The 151-residue stretch at 2 to 152 (SMTRQEIQDL…FNAECQVHLK (151 aa)) folds into the Globin domain. H101 provides a ligand contact to heme.

The protein belongs to the globin family.

It is found in the cytoplasm. In terms of biological role, may be a globin and may play a role in oxygen transport. In Caenorhabditis briggsae, this protein is Globin-like protein (glb-1).